Reading from the N-terminus, the 511-residue chain is Myrosinase 5 (511 aa).

Positions 1-23 (MAIPKAHYSLAVLVLLFVVVSSS) are cleaved as a signal peptide. Disulfide bonds link cysteine 31–cysteine 450, cysteine 39–cysteine 445, and cysteine 230–cysteine 233. Residues asparagine 46 and asparagine 53 are each glycosylated (N-linked (GlcNAc...) asparagine). Residues glutamine 64, histidine 165, and 210–211 (NQ) each bind a beta-D-glucoside. Asparagine 222 carries N-linked (GlcNAc...) asparagine glycosylation. 2 residues coordinate a beta-D-glucoside: tyrosine 351 and glutamate 418. Glutamate 418 serves as the catalytic Nucleophile. Residue asparagine 428 is glycosylated (N-linked (GlcNAc...) asparagine). A beta-D-glucoside-binding positions include tryptophan 467, 474-475 (EF), and phenylalanine 483. Asparagine 489 is a glycosylation site (N-linked (GlcNAc...) asparagine).

Belongs to the glycosyl hydrolase 1 family. Specifically expressed in roots.

It carries out the reaction a thioglucoside + H2O = a sugar + a thiol.. It catalyses the reaction Hydrolysis of terminal, non-reducing beta-D-glucosyl residues with release of beta-D-glucose.. In terms of biological role, hydrolyzes sinigrin and, with lower efficiency, p-nitrophenyl beta-D-glucoside. The polypeptide is Myrosinase 5 (Arabidopsis thaliana (Mouse-ear cress)).